The chain runs to 515 residues: Na(+)/H(+) antiporter NhaB (515 aa).

The next 13 membrane-spanning stretches (helical) occupy residues 23–43 (IIVFLILNPILYFLISPFIAG), 44–64 (WCLVIEFIFTLAMALKCYPLQ), 88–108 (IMASFEVILLLMFMVAGIYFM), 119–139 (LLITVRSKIVLSLSFCLSAAF), 143–163 (FLDALTVVAVIISVVMGFYGV), 202–222 (LMMHAGVGTALGGVMTLVGEP), 238–258 (FFIRMAPVTVPVLICGLITCV), 303–323 (GIIGIWLVCGLAFHLAAVGLI), 324–344 (GLSVIVLTTAFCGITSESTIG), 357–377 (LVVFFSVVAVIIDQHLFGPII), 389–409 (LLLFYGFNGLLSAISDNVFVA), 447–467 (ATPNGQAAFLFLLTSSLAPLI), and 477–497 (MALPYTIVLTVVGLLAVEYIL).

Belongs to the NhaB Na(+)/H(+) (TC 2.A.34) antiporter family.

Its subcellular location is the cell inner membrane. It carries out the reaction 2 Na(+)(in) + 3 H(+)(out) = 2 Na(+)(out) + 3 H(+)(in). Na(+)/H(+) antiporter that extrudes sodium in exchange for external protons. This chain is Na(+)/H(+) antiporter NhaB, found in Mannheimia succiniciproducens (strain KCTC 0769BP / MBEL55E).